A 168-amino-acid polypeptide reads, in one-letter code: CASP-like protein 1U1 (168 aa).

Over 1–6 (MDGAAR) the chain is Cytoplasmic. The helical transmembrane segment at 7–27 (AVSLFFRIAVVGLSVAAAVVM) threads the bilayer. The Extracellular segment spans residues 28–49 (ATASQAFPFNYGGAVSYTKYPA). Residues 50-70 (FVYFVVAAVVSAVCSAAALYL) traverse the membrane as a helical segment. The Cytoplasmic portion of the chain corresponds to 71-80 (SVVREAAAGW). The chain crosses the membrane as a helical span at residues 81–101 (AVALLDVVTMGLLFSAAGAVF). At 102 to 138 (AVRRMAPLYLGVAGADTVAGRWVNGEFCHAAGAFCWR) the chain is on the extracellular side. Residues 139–159 (VTTSAIICAFAAAAVSVAVLT) form a helical membrane-spanning segment. The Cytoplasmic segment spans residues 160-168 (KGARHRGKH).

The protein belongs to the Casparian strip membrane proteins (CASP) family. As to quaternary structure, homodimer and heterodimers.

It is found in the cell membrane. The sequence is that of CASP-like protein 1U1 from Oryza sativa subsp. japonica (Rice).